Here is a 222-residue protein sequence, read N- to C-terminus: Peptide methionine sulfoxide reductase MsrA (222 aa).

Residue C54 is part of the active site.

It belongs to the MsrA Met sulfoxide reductase family.

The enzyme catalyses L-methionyl-[protein] + [thioredoxin]-disulfide + H2O = L-methionyl-(S)-S-oxide-[protein] + [thioredoxin]-dithiol. It carries out the reaction [thioredoxin]-disulfide + L-methionine + H2O = L-methionine (S)-S-oxide + [thioredoxin]-dithiol. Its function is as follows. Has an important function as a repair enzyme for proteins that have been inactivated by oxidation. Catalyzes the reversible oxidation-reduction of methionine sulfoxide in proteins to methionine. This chain is Peptide methionine sulfoxide reductase MsrA, found in Methylococcus capsulatus (strain ATCC 33009 / NCIMB 11132 / Bath).